Consider the following 484-residue polypeptide: Bifunctional protein GlmU (484 aa).

Positions 1–240 are pyrophosphorylase; the sequence is MSNPHSSAVI…HRELAGVNDR (240 aa). UDP-N-acetyl-alpha-D-glucosamine-binding positions include 12–15, lysine 26, glutamine 83, and 88–89; these read LAAG and GT. Aspartate 113 serves as a coordination point for Mg(2+). Residues glycine 150, glutamate 165, asparagine 180, and asparagine 238 each contribute to the UDP-N-acetyl-alpha-D-glucosamine site. A Mg(2+)-binding site is contributed by asparagine 238. The tract at residues 241–261 is linker; it reads VQLAQAGKILNQRLVEDAMRN. Residues 262 to 484 form an N-acetyltransferase region; sequence GATIVDPDTT…QAHAHETKEG (223 aa). Positions 343 and 361 each coordinate UDP-N-acetyl-alpha-D-glucosamine. The active-site Proton acceptor is histidine 373. Tyrosine 376 and asparagine 387 together coordinate UDP-N-acetyl-alpha-D-glucosamine. Residues alanine 390, 396–397, serine 415, and alanine 433 contribute to the acetyl-CoA site; that span reads NY. A disordered region spans residues 461–484; the sequence is EKNRPGTPAADAARQAHAHETKEG.

This sequence in the N-terminal section; belongs to the N-acetylglucosamine-1-phosphate uridyltransferase family. The protein in the C-terminal section; belongs to the transferase hexapeptide repeat family. As to quaternary structure, homotrimer. Requires Mg(2+) as cofactor.

The protein localises to the cytoplasm. It catalyses the reaction alpha-D-glucosamine 1-phosphate + acetyl-CoA = N-acetyl-alpha-D-glucosamine 1-phosphate + CoA + H(+). It carries out the reaction N-acetyl-alpha-D-glucosamine 1-phosphate + UTP + H(+) = UDP-N-acetyl-alpha-D-glucosamine + diphosphate. The protein operates within nucleotide-sugar biosynthesis; UDP-N-acetyl-alpha-D-glucosamine biosynthesis; N-acetyl-alpha-D-glucosamine 1-phosphate from alpha-D-glucosamine 6-phosphate (route II): step 2/2. It participates in nucleotide-sugar biosynthesis; UDP-N-acetyl-alpha-D-glucosamine biosynthesis; UDP-N-acetyl-alpha-D-glucosamine from N-acetyl-alpha-D-glucosamine 1-phosphate: step 1/1. Its pathway is bacterial outer membrane biogenesis; LPS lipid A biosynthesis. Catalyzes the last two sequential reactions in the de novo biosynthetic pathway for UDP-N-acetylglucosamine (UDP-GlcNAc). The C-terminal domain catalyzes the transfer of acetyl group from acetyl coenzyme A to glucosamine-1-phosphate (GlcN-1-P) to produce N-acetylglucosamine-1-phosphate (GlcNAc-1-P), which is converted into UDP-GlcNAc by the transfer of uridine 5-monophosphate (from uridine 5-triphosphate), a reaction catalyzed by the N-terminal domain. The polypeptide is Bifunctional protein GlmU (Corynebacterium diphtheriae (strain ATCC 700971 / NCTC 13129 / Biotype gravis)).